The sequence spans 126 residues: Profilin-2 (126 aa).

Blocked amino end (Ser) is present on Ser-2. At Lys-104 the chain carries N6,N6,N6-trimethyllysine.

The protein belongs to the profilin family. As to quaternary structure, occurs in many kinds of cells as a complex with monomeric actin in a 1:1 ratio.

The protein resides in the cytoplasm. Its subcellular location is the cytoskeleton. Binds to actin and affects the structure of the cytoskeleton. At high concentrations, profilin prevents the polymerization of actin, whereas it enhances it at low concentrations. By binding to PIP2, it inhibits the formation of IP3 and DG. This chain is Profilin-2, found in Acanthamoeba castellanii (Amoeba).